A 127-amino-acid chain; its full sequence is DNA-directed RNA polymerase subunit omega (127 aa).

It belongs to the RNA polymerase subunit omega family. In terms of assembly, the RNAP catalytic core consists of 2 alpha, 1 beta, 1 beta' and 1 omega subunit. When a sigma factor is associated with the core the holoenzyme is formed, which can initiate transcription.

The enzyme catalyses RNA(n) + a ribonucleoside 5'-triphosphate = RNA(n+1) + diphosphate. In terms of biological role, promotes RNA polymerase assembly. Latches the N- and C-terminal regions of the beta' subunit thereby facilitating its interaction with the beta and alpha subunits. The polypeptide is DNA-directed RNA polymerase subunit omega (Rickettsia typhi (strain ATCC VR-144 / Wilmington)).